The following is a 227-amino-acid chain: MATAVGMNIQLLLEAADYLERREREAEHGYASMLPYSKDRDAFKRRNKPKKNSTSSRSTHNEMEKNRRAHLRLCLEKLKGLVPLGPESSRHTTLSLLTKAKLHIKKLEDCDRKAVHQIDQLQREQRHLKRRLEKLGAERTRMDSVGSVVSSERSDSDREELDVDVDVDVDVDVEGTDYLNGDLGWSSSVSDSDERGSMQSLGSDEGYSSATVKRAKLQDGHKAGLGL.

Residues 21–48 (RREREAEHGYASMLPYSKDRDAFKRRNK) carry the Nuclear localization signal motif. Disordered regions lie at residues 30 to 66 (YASMLPYSKDRDAFKRRNKPKKNSTSSRSTHNEMEKN), 142 to 161 (MDSVGSVVSSERSDSDREEL), and 184 to 227 (GWSS…GLGL). A bHLH domain is found at 55-107 (SSRSTHNEMEKNRRAHLRLCLEKLKGLVPLGPESSRHTTLSLLTKAKLHIKKL). Polar residues predominate over residues 198–211 (MQSLGSDEGYSSAT). Residues 216-227 (KLQDGHKAGLGL) are compositionally biased toward basic and acidic residues.

As to quaternary structure, heterodimer with MAX; the interaction is required for DNA-binding. DNA binding requires dimerization with another bHLH protein; does not form homodimers, and does not bind to DNA in the absence of MAX in vitro. Interacts with RNF17. Ubiquitinated by BIRC2/c-IAP1, leading to its subsequent degradation by the proteasome.

It localises to the nucleus. Its function is as follows. Component of a transcriptional repressor complex together with MAX. In complex with MAX binds to the core DNA sequence 5'-CAC[GA]TG-3'. Antagonizes MYC transcriptional activity by competing with MYC for MAX binding. Binds to the TERT promoter and represses telomerase expression, possibly by interfering with MYC binding. This is Max dimerization protein 1 (Mxd1) from Mus musculus (Mouse).